The following is a 1324-amino-acid chain: Probable phosphoribosylformylglycinamidine synthase (1324 aa).

ATP is bound by residues 314 to 325 (GATTGTGGRIRD), 394 to 396 (SGF), and Ala-681. The Mg(2+) site is built by Asp-682, Glu-721, Asn-725, and Asp-894. Ser-896 provides a ligand contact to ATP. In terms of domain architecture, Glutamine amidotransferase type-1 spans 1053–1295 (RVAIIREEGS…LTWQWAESSE (243 aa)). The active-site Nucleophile is the Cys-1146. Residues His-1280 and Asp-1282 contribute to the active site.

In the N-terminal section; belongs to the FGAMS family.

The protein localises to the cytoplasm. It catalyses the reaction N(2)-formyl-N(1)-(5-phospho-beta-D-ribosyl)glycinamide + L-glutamine + ATP + H2O = 2-formamido-N(1)-(5-O-phospho-beta-D-ribosyl)acetamidine + L-glutamate + ADP + phosphate + H(+). Its pathway is purine metabolism; IMP biosynthesis via de novo pathway; 5-amino-1-(5-phospho-D-ribosyl)imidazole from N(2)-formyl-N(1)-(5-phospho-D-ribosyl)glycinamide: step 1/2. Functionally, phosphoribosylformylglycinamidine synthase involved in the purines biosynthetic pathway. Catalyzes the ATP-dependent conversion of formylglycinamide ribonucleotide (FGAR) and glutamine to yield formylglycinamidine ribonucleotide (FGAM) and glutamate. The chain is Probable phosphoribosylformylglycinamidine synthase from Caenorhabditis elegans.